Reading from the N-terminus, the 368-residue chain is Probable endopolygalacturonase I (368 aa).

A signal peptide spans 1–18; that stretch reads MHSFQLLGLAALGSLVAA. A propeptide spanning residues 19–31 is cleaved from the precursor; sequence APSPSRVSDLTER. An intrachain disulfide couples cysteine 35 to cysteine 50. PbH1 repeat units lie at residues 162–192, 193–214, 215–235, 244–265, 273–295, and 307–328; these read ANNL…DISE, SNGV…AINS, GKNI…SIGS, VQGV…RIKT, VSDV…VIQQ, and SNGI…DSKA. The Proton donor role is filled by aspartate 207. Cysteine 209 and cysteine 225 are oxidised to a cystine. Histidine 229 is a catalytic residue. Cystine bridges form between cysteine 335–cysteine 340 and cysteine 359–cysteine 368.

It belongs to the glycosyl hydrolase 28 family.

The protein resides in the secreted. It catalyses the reaction (1,4-alpha-D-galacturonosyl)n+m + H2O = (1,4-alpha-D-galacturonosyl)n + (1,4-alpha-D-galacturonosyl)m.. Functionally, involved in maceration and soft-rotting of plant tissue. Hydrolyzes the 1,4-alpha glycosidic bonds of de-esterified pectate in the smooth region of the plant cell wall. The polypeptide is Probable endopolygalacturonase I (pgaI) (Aspergillus terreus (strain NIH 2624 / FGSC A1156)).